Here is a 164-residue protein sequence, read N- to C-terminus: Phosphopantetheine adenylyltransferase (164 aa).

It belongs to the eukaryotic CoaD family.

It localises to the cytoplasm. It catalyses the reaction (R)-4'-phosphopantetheine + ATP + H(+) = 3'-dephospho-CoA + diphosphate. It participates in cofactor biosynthesis; coenzyme A biosynthesis. Its function is as follows. Reversibly transfers an adenylyl group from ATP to 4'-phosphopantetheine, yielding dephospho-CoA (dPCoA) and pyrophosphate. This Methanothermobacter thermautotrophicus (strain ATCC 29096 / DSM 1053 / JCM 10044 / NBRC 100330 / Delta H) (Methanobacterium thermoautotrophicum) protein is Phosphopantetheine adenylyltransferase.